We begin with the raw amino-acid sequence, 205 residues long: SREBP regulating gene protein (205 aa).

The Cytoplasmic portion of the chain corresponds to 1 to 16; that stretch reads MALYVSMVWRKILRKR. The helical transmembrane segment at 17–35 threads the bilayer; sequence WVLGVVFGLSLIYFLTSTF. At 36–205 the chain is on the lumenal side; the sequence is KQEERTVRDR…GESPPELLPI (170 aa). N-linked (GlcNAc...) asparagine glycosylation occurs at Asn67.

Belongs to the SPRING family.

It is found in the golgi apparatus membrane. Its function is as follows. Positively regulates hepatic SREBP signaling pathway by modulating the proper localization of SCAP (SREBP cleavage-activating protein) to the endoplasmic reticulum, thereby controlling the level of functional SCAP. The polypeptide is SREBP regulating gene protein (Xenopus laevis (African clawed frog)).